A 382-amino-acid chain; its full sequence is Membrane protein MLC1 (382 aa).

Over residues M1–R28 the composition is skewed to basic and acidic residues. Residues M1 to L43 form a disordered region. 4 helical membrane passes run W58–L78, Y88–G107, F117–C137, and I148–I168. S183, S185, and S188 each carry phosphoserine. 4 helical membrane-spanning segments follow: residues S205–V225, L234–V254, L263–G283, and L309–I329.

As to quaternary structure, interacts with ATP1B1. Part of a complex containing ATP1B1, TRPV4, AQP4 and HEPACAM.

It localises to the membrane. Its subcellular location is the cell membrane. The protein localises to the cytoplasm. The protein resides in the perinuclear region. It is found in the endoplasmic reticulum. Its function is as follows. Transmembrane protein mainly expressed in brain astrocytes that may play a role in transport across the blood-brain and brain-cerebrospinal fluid barriers. Regulates the response of astrocytes to hypo-osmosis by promoting calcium influx. May function as regulatory protein of membrane protein complexes such as ion channels. This is Membrane protein MLC1 from Mus musculus (Mouse).